The following is a 472-amino-acid chain: Adenosylhomocysteinase (472 aa).

Residues threonine 64, aspartate 138, and glutamate 198 each contribute to the substrate site. Residue 199–201 (TTT) coordinates NAD(+). Lysine 228 and aspartate 232 together coordinate substrate. Residues asparagine 233, 262–267 (GFGDVG), glutamate 285, asparagine 320, 341–343 (IGH), and asparagine 386 each bind NAD(+).

It belongs to the adenosylhomocysteinase family. NAD(+) is required as a cofactor.

Its subcellular location is the cytoplasm. The catalysed reaction is S-adenosyl-L-homocysteine + H2O = L-homocysteine + adenosine. It functions in the pathway amino-acid biosynthesis; L-homocysteine biosynthesis; L-homocysteine from S-adenosyl-L-homocysteine: step 1/1. Its function is as follows. May play a key role in the regulation of the intracellular concentration of adenosylhomocysteine. The sequence is that of Adenosylhomocysteinase from Prochlorococcus marinus (strain MIT 9215).